The following is a 194-amino-acid chain: A-type ATP synthase subunit E (194 aa).

Belongs to the V-ATPase E subunit family. In terms of assembly, has multiple subunits with at least A(3), B(3), C, D, E, F, H, I and proteolipid K(x).

It localises to the cell membrane. Component of the A-type ATP synthase that produces ATP from ADP in the presence of a proton gradient across the membrane. The polypeptide is A-type ATP synthase subunit E (Saccharolobus islandicus (strain Y.N.15.51 / Yellowstone #2) (Sulfolobus islandicus)).